A 1111-amino-acid chain; its full sequence is Receptor-type guanylate cyclase gcy-14 (1111 aa).

Positions 1–14 are cleaved as a signal peptide; the sequence is MCLFLLLFPYLASG. Residues 15–473 are Extracellular-facing; the sequence is QFLQTVKVGL…ECPPDFVKEY (459 aa). Asn65, Asn130, Asn318, Asn340, Asn365, and Asn379 each carry an N-linked (GlcNAc...) asparagine glycan. Residues 474 to 494 form a helical membrane-spanning segment; it reads LVYTIIAAVIVVLALLAGCAG. The Protein kinase domain occupies 482–817; the sequence is VIVVLALLAG…KSNLMDHVFN (336 aa). Residues 488 to 496 and Lys545 contribute to the ATP site; that span reads LLAGCAGLL. Over 495–1111 the chain is Cytoplasmic; that stretch reads LLYTMQMKRK…DFNNGNECVS (617 aa). The Guanylate cyclase domain occupies 875–1005; sequence TIFFSDVVQF…DAVNTASRME (131 aa). The tract at residues 1061 to 1082 is disordered; the sequence is SAQAPREKTPEPPRRQSVRSIS. Residues 1065–1074 are compositionally biased toward basic and acidic residues; sequence PREKTPEPPR.

Belongs to the adenylyl cyclase class-4/guanylyl cyclase family. As to quaternary structure, homodimer. Expressed asymmetrically in ASEL sensory neuron.

The protein resides in the cell membrane. Its subcellular location is the cell projection. The protein localises to the cilium. It catalyses the reaction GTP = 3',5'-cyclic GMP + diphosphate. Functionally, guanylate cyclase involved in the production of the second messenger cGMP. Regulates chemotaxis responses toward Na(1+) and Li(1+) salt ions and alkaline pH in ASE left (ASEL) sensory neuron. Directly senses environmental alkalinity in ASEL neuron which probably leads to the activation of cGMP-gated cation channel tax2/tax4. The protein is Receptor-type guanylate cyclase gcy-14 of Caenorhabditis elegans.